The chain runs to 555 residues: Glutamine--tRNA ligase (555 aa).

A 'HIGH' region motif is present at residues 34–44 (PEPNGYLHIGH). ATP is bound by residues 35–37 (EPN) and 41–47 (HIGHAKS). L-glutamine-binding residues include aspartate 67 and tyrosine 212. ATP-binding positions include threonine 231, 261 to 262 (RL), and 269 to 271 (MSK). The 'KMSKS' region signature appears at 268–272 (IMSKR).

The protein belongs to the class-I aminoacyl-tRNA synthetase family. In terms of assembly, monomer.

The protein localises to the cytoplasm. It catalyses the reaction tRNA(Gln) + L-glutamine + ATP = L-glutaminyl-tRNA(Gln) + AMP + diphosphate. This Yersinia pseudotuberculosis serotype O:3 (strain YPIII) protein is Glutamine--tRNA ligase.